The following is a 152-amino-acid chain: Prostaglandin E synthase (152 aa).

Topologically, residues 1–12 (MPAHSLVMSSPA) are lumenal. Residues 13 to 41 (LPAFLLCSTLLVIKMYVVAIITGQVRLRK) form a helical membrane-spanning segment. Arginine 38 is a binding site for glutathione. Residues 42–60 (KAFANPEDALRHGGPQYCR) are Cytoplasmic-facing. The helical transmembrane segment at 61-90 (SDPDVERCLRAHRNDMETIYPFLFLGFVYS) threads the bilayer. Residue 73-77 (RNDME) coordinates glutathione. The Lumenal segment spans residues 91-95 (FLGPN). Residues 96–119 (PFVAWMHFLVFLVGRVAHTVAYLG) traverse the membrane as a helical segment. Histidine 113 and tyrosine 117 together coordinate glutathione. At 120–123 (KLRA) the chain is on the cytoplasmic side. The helical transmembrane segment at 124 to 152 (PIRSVTYTLAQLPCASMALQILWEAARHL) threads the bilayer. 126–130 (RSVTY) is a binding site for glutathione.

This sequence belongs to the MAPEG family. As to quaternary structure, homotrimer. It depends on glutathione as a cofactor.

The protein localises to the membrane. It localises to the cytoplasm. It is found in the perinuclear region. It catalyses the reaction prostaglandin H2 = prostaglandin E2. It carries out the reaction 2-glyceryl-prostaglandin H2 = 2-glyceryl-prostaglandin E2. The catalysed reaction is prostaglandin G2 = (15S)-15-hydroperoxy-prostaglandin E2. The enzyme catalyses 1-chloro-2,4-dinitrobenzene + glutathione = 2,4-dinitrophenyl-S-glutathione + chloride + H(+). It catalyses the reaction (5S)-hydroperoxy-(6E,8Z,11Z,14Z)-eicosatetraenoate + 2 glutathione = (5S)-hydroxy-(6E,8Z,11Z,14Z)-eicosatetraenoate + glutathione disulfide + H2O. It functions in the pathway lipid metabolism; prostaglandin biosynthesis. Induced by interleukin IL1B. Its function is as follows. Terminal enzyme of the cyclooxygenase (COX)-2-mediated prostaglandin E2 (PGE2) biosynthetic pathway. Catalyzes the glutathione-dependent oxidoreduction of prostaglandin endoperoxide H2 (PGH2) to prostaglandin E2 (PGE2) in response to inflammatory stimuli. Plays a key role in inflammation response, fever and pain. Also catalyzes the oxidoreduction of endocannabinoids into prostaglandin glycerol esters and PGG2 into 15-hydroperoxy-PGE2. In addition, displays low glutathione transferase and glutathione-dependent peroxidase activities, toward 1-chloro-2,4-dinitrobenzene and 5-hydroperoxyicosatetraenoic acid (5-HPETE), respectively. This chain is Prostaglandin E synthase (PTGES), found in Homo sapiens (Human).